The primary structure comprises 550 residues: CTP synthase (550 aa).

The segment at 1 to 266 (MNVNYIFVTG…DEYICKYFNL (266 aa)) is amidoligase domain. Residue serine 14 coordinates CTP. Residue serine 14 coordinates UTP. ATP contacts are provided by residues 15–20 (SLGKGI) and aspartate 72. Mg(2+) is bound by residues aspartate 72 and glutamate 140. CTP-binding positions include 147 to 149 (DIE), 187 to 192 (KTKPTQ), and lysine 223. UTP is bound by residues 187 to 192 (KTKPTQ) and lysine 223. The Glutamine amidotransferase type-1 domain maps to 291-546 (TIGIVGKYIR…INAAIQYQCK (256 aa)). Glycine 353 is a binding site for L-glutamine. The active-site Nucleophile; for glutamine hydrolysis is the cysteine 380. Residues 381–384 (LGMQ), glutamate 404, and arginine 474 each bind L-glutamine. Residues histidine 519 and glutamate 521 contribute to the active site.

This sequence belongs to the CTP synthase family. In terms of assembly, homotetramer.

It catalyses the reaction UTP + L-glutamine + ATP + H2O = CTP + L-glutamate + ADP + phosphate + 2 H(+). The enzyme catalyses L-glutamine + H2O = L-glutamate + NH4(+). The catalysed reaction is UTP + NH4(+) + ATP = CTP + ADP + phosphate + 2 H(+). The protein operates within pyrimidine metabolism; CTP biosynthesis via de novo pathway; CTP from UDP: step 2/2. With respect to regulation, allosterically activated by GTP, when glutamine is the substrate; GTP has no effect on the reaction when ammonia is the substrate. The allosteric effector GTP functions by stabilizing the protein conformation that binds the tetrahedral intermediate(s) formed during glutamine hydrolysis. Inhibited by the product CTP, via allosteric rather than competitive inhibition. Its function is as follows. Catalyzes the ATP-dependent amination of UTP to CTP with either L-glutamine or ammonia as the source of nitrogen. Regulates intracellular CTP levels through interactions with the four ribonucleotide triphosphates. The protein is CTP synthase of Blochmanniella floridana.